The sequence spans 305 residues: Ubiquinone biosynthesis protein COQ4 homolog, mitochondrial (305 aa).

4 residues coordinate Zn(2+): histidine 150, aspartate 151, histidine 154, and glutamate 166.

This sequence belongs to the COQ4 family. Component of a multi-subunit COQ enzyme complex. Zn(2+) serves as cofactor.

It is found in the mitochondrion inner membrane. It catalyses the reaction a 4-hydroxy-3-methoxy-5-(all-trans-polyprenyl)benzoate + H(+) = a 2-methoxy-6-(all-trans-polyprenyl)phenol + CO2. Its pathway is cofactor biosynthesis; ubiquinone biosynthesis. Its function is as follows. Lyase that catalyzes the C1-decarboxylation of 4-hydroxy-3-methoxy-5-(all-trans-polyprenyl)benzoic acid into 2-methoxy-6-(all-trans-polyprenyl)phenol during ubiquinone biosynthesis. This Cryptosporidium parvum (strain Iowa II) protein is Ubiquinone biosynthesis protein COQ4 homolog, mitochondrial.